Reading from the N-terminus, the 207-residue chain is Outer-membrane lipoprotein LolB (207 aa).

Positions 1-21 (MTLPDFRLIRLLPLASLVLTA) are cleaved as a signal peptide. C22 is lipidated: N-palmitoyl cysteine. The S-diacylglycerol cysteine moiety is linked to residue C22.

Belongs to the LolB family. Monomer.

The protein localises to the cell outer membrane. Its function is as follows. Plays a critical role in the incorporation of lipoproteins in the outer membrane after they are released by the LolA protein. The protein is Outer-membrane lipoprotein LolB of Citrobacter koseri (strain ATCC BAA-895 / CDC 4225-83 / SGSC4696).